Reading from the N-terminus, the 633-residue chain is Chaperone protein DnaK (633 aa).

Thr-196 is subject to Phosphothreonine; by autocatalysis. A disordered region spans residues 594 to 633 (NLYGQPGAEPQPETNGHAGGSKGGDGAVNAEYEVIDGDDK). The span at 610-619 (HAGGSKGGDG) shows a compositional bias: gly residues.

It belongs to the heat shock protein 70 family.

Functionally, acts as a chaperone. The sequence is that of Chaperone protein DnaK from Chlorobaculum tepidum (strain ATCC 49652 / DSM 12025 / NBRC 103806 / TLS) (Chlorobium tepidum).